We begin with the raw amino-acid sequence, 83 residues long: High-potential iron-sulfur protein (83 aa).

Cys43, Cys46, Cys61, and Cys75 together coordinate [4Fe-4S] cluster.

Belongs to the high-potential iron-sulfur protein (HiPIP) family. Homodimer.

The protein localises to the periplasm. Its function is as follows. Specific class of high-redox-potential 4Fe-4S ferredoxins. Functions in anaerobic electron transport in most purple and in some other photosynthetic bacteria and in at least one genus (Paracoccus) of halophilic, denitrifying bacteria. The chain is High-potential iron-sulfur protein from Isochromatium buderi (Chromatium buderi).